A 362-amino-acid polypeptide reads, in one-letter code: Tyrosyl-DNA phosphodiesterase 2 (362 aa).

Position 1 is an N-acetylmethionine (Met-1). The segment at 1 to 20 (MELGSCLEGGREAAEEEGEP) is disordered. Glycyl lysine isopeptide (Lys-Gly) (interchain with G-Cter in SUMO2) cross-links involve residues Lys-23 and Lys-82. The segment at 87–109 (LTNEETTDSTTSKISPSEDTQQE) is disordered. A phosphothreonine; by ACVR1B mark is found at Thr-88 and Thr-92. Residues 94–109 (DSTTSKISPSEDTQQE) show a composition bias toward polar residues. Ser-95 is modified (phosphoserine). The tract at residues 120–124 (NIDGL) is interaction with 5' end of substrate DNA. The Mg(2+) site is built by Asp-122 and Glu-152. Positions 226 to 231 (HLESTR) are interaction with 5' end of substrate DNA. Catalysis depends on Asp-262, which acts as the Proton donor/acceptor. The interval 264-266 (NLR) is interaction with 5' end of substrate DNA.

Belongs to the CCR4/nocturin family. In terms of assembly, interacts with TRAF2, TRAF3, TRAF5, TRAF6, TNFRSF8/CD30, TNFRSF5/CD40, TNFRSF1B/TNF-R75, ETS1, ETS2, FLI1, SMAD3 and ACVR1B/ALK4. As to quaternary structure, (Microbial infection) Interacts with Hantaan hantavirus nucleoprotein. (Microbial infection) Interacts with Seoul hantavirus nucleoprotein. Mg(2+) is required as a cofactor. Mn(2+) serves as cofactor. Post-translationally, ubiquitinated by TRAF6. Widely expressed. Highly expressed in various brain regions, including the frontal and occipital lobes, the hippocampus, the striatum and the cerebellum.

It is found in the nucleus. Its subcellular location is the PML body. The protein resides in the nucleolus. It localises to the cytoplasm. In terms of biological role, DNA repair enzyme that can remove a variety of covalent adducts from DNA through hydrolysis of a 5'-phosphodiester bond, giving rise to DNA with a free 5' phosphate. Catalyzes the hydrolysis of dead-end complexes between DNA and the topoisomerase 2 (TOP2) active site tyrosine residue. The 5'-tyrosyl DNA phosphodiesterase activity can enable the repair of TOP2-induced DNA double-strand breaks/DSBs without the need for nuclease activity, creating a 'clean' DSB with 5'-phosphate termini that are ready for ligation. Thereby, protects the transcription of many genes involved in neurological development and maintenance from the abortive activity of TOP2. Hydrolyzes 5'-phosphoglycolates on protruding 5' ends on DSBs due to DNA damage by radiation and free radicals. Has preference for single-stranded DNA or duplex DNA with a 4 base pair overhang as substrate. Acts as a regulator of ribosome biogenesis following stress. Also has 3'-tyrosyl DNA phosphodiesterase activity, but less efficiently and much slower than TDP1. Constitutes the major if not only 5'-tyrosyl-DNA phosphodiesterase in cells. Also acts as an adapter by participating in the specific activation of MAP3K7/TAK1 in response to TGF-beta: associates with components of the TGF-beta receptor-TRAF6-TAK1 signaling module and promotes their ubiquitination dependent complex formation. Involved in non-canonical TGF-beta induced signaling routes. May also act as a negative regulator of ETS1 and may inhibit NF-kappa-B activation. Its function is as follows. (Microbial infection) Used by picornaviruses to remove the small polypeptide, VPg (virus Protein genome-linked, the primer for viral RNA synthesis), from the genomic RNA of the virus. Acts as a 5'-tyrosyl RNA phosphodiesterase and cleaves the covalent VPg-Tyr-RNA bond. This cleavage would play a role in viral replication and occur in viral replication vesicles, but would not act on viral mRNA. The sequence is that of Tyrosyl-DNA phosphodiesterase 2 from Homo sapiens (Human).